Here is a 262-residue protein sequence, read N- to C-terminus: Flap endonuclease Xni (262 aa).

A Mg(2+)-binding site is contributed by Asp105. In terms of domain architecture, 5'-3' exonuclease spans 162-257 (ERSQFLDLMA…FRVIDSPPEK (96 aa)). Residues Leu172, Ala173, Pro181, Ile183, and Ile186 each contribute to the K(+) site. Positions 185 to 190 (GIGPKS) are interaction with DNA.

Belongs to the Xni family. It depends on Mg(2+) as a cofactor. The cofactor is K(+).

In terms of biological role, has flap endonuclease activity. During DNA replication, flap endonucleases cleave the 5'-overhanging flap structure that is generated by displacement synthesis when DNA polymerase encounters the 5'-end of a downstream Okazaki fragment. In Shewanella baltica (strain OS155 / ATCC BAA-1091), this protein is Flap endonuclease Xni.